We begin with the raw amino-acid sequence, 468 residues long: BTB/POZ domain-containing protein 17 (468 aa).

Positions 1–16 (MRRFCVVPLLLVLVEA) are cleaved as a signal peptide. The 70-residue stretch at 51–120 (TDTILRIRTA…FYCGEISVNL (70 aa)) folds into the BTB domain. The BACK domain occupies 159 to 259 (VVSWYHYALR…ISPSQLFQIQ (101 aa)).

It is found in the secreted. The sequence is that of BTB/POZ domain-containing protein 17 (btbd17) from Xenopus tropicalis (Western clawed frog).